A 204-amino-acid polypeptide reads, in one-letter code: FMN-dependent NADH:quinone oxidoreductase 5 (204 aa).

S10 lines the FMN pocket.

It belongs to the azoreductase type 1 family. As to quaternary structure, homodimer. FMN is required as a cofactor.

It carries out the reaction 2 a quinone + NADH + H(+) = 2 a 1,4-benzosemiquinone + NAD(+). The catalysed reaction is N,N-dimethyl-1,4-phenylenediamine + anthranilate + 2 NAD(+) = 2-(4-dimethylaminophenyl)diazenylbenzoate + 2 NADH + 2 H(+). Its function is as follows. Quinone reductase that provides resistance to thiol-specific stress caused by electrophilic quinones. Functionally, also exhibits azoreductase activity. Catalyzes the reductive cleavage of the azo bond in aromatic azo compounds to the corresponding amines. In Burkholderia lata (strain ATCC 17760 / DSM 23089 / LMG 22485 / NCIMB 9086 / R18194 / 383), this protein is FMN-dependent NADH:quinone oxidoreductase 5.